A 74-amino-acid chain; its full sequence is Small ribosomal subunit protein eS17 (74 aa).

The protein belongs to the eukaryotic ribosomal protein eS17 family.

This is Small ribosomal subunit protein eS17 from Aeropyrum pernix (strain ATCC 700893 / DSM 11879 / JCM 9820 / NBRC 100138 / K1).